The following is a 397-amino-acid chain: Phosphoglycerate kinase (397 aa).

Residues D25–N27, R41, H64–R67, R118, and R151 each bind substrate. ATP is bound by residues K202, E324, and G350–T353.

This sequence belongs to the phosphoglycerate kinase family. In terms of assembly, monomer.

It localises to the cytoplasm. It catalyses the reaction (2R)-3-phosphoglycerate + ATP = (2R)-3-phospho-glyceroyl phosphate + ADP. It participates in carbohydrate degradation; glycolysis; pyruvate from D-glyceraldehyde 3-phosphate: step 2/5. The sequence is that of Phosphoglycerate kinase from Acidovorax sp. (strain JS42).